A 333-amino-acid polypeptide reads, in one-letter code: NADH-quinone oxidoreductase subunit H (333 aa).

Transmembrane regions (helical) follow at residues 15-35 (LVIF…FVTY), 88-108 (FILA…TLPF), 117-137 (IGVG…GVVA), 159-179 (ISYE…TGSL), 191-211 (VWYI…AVAE), 250-270 (LFAM…PVMF), 273-293 (FIPG…VLIW), and 313-333 (VLFP…ELFF).

The protein belongs to the complex I subunit 1 family. NDH-1 is composed of 14 different subunits. Subunits NuoA, H, J, K, L, M, N constitute the membrane sector of the complex.

It localises to the cell membrane. The enzyme catalyses a quinone + NADH + 5 H(+)(in) = a quinol + NAD(+) + 4 H(+)(out). NDH-1 shuttles electrons from NADH, via FMN and iron-sulfur (Fe-S) centers, to quinones in the respiratory chain. The immediate electron acceptor for the enzyme in this species is believed to be ubiquinone. Couples the redox reaction to proton translocation (for every two electrons transferred, four hydrogen ions are translocated across the cytoplasmic membrane), and thus conserves the redox energy in a proton gradient. This subunit may bind ubiquinone. The polypeptide is NADH-quinone oxidoreductase subunit H (Geobacillus sp. (strain WCH70)).